Reading from the N-terminus, the 251-residue chain is Sugar fermentation stimulation protein homolog (251 aa).

The protein belongs to the SfsA family.

The sequence is that of Sugar fermentation stimulation protein homolog from Yersinia pseudotuberculosis serotype O:1b (strain IP 31758).